Reading from the N-terminus, the 379-residue chain is 1-deoxy-D-xylulose 5-phosphate reductoisomerase (379 aa).

NADPH-binding residues include T10, G11, S12, I13, R38, N39, and N121. K122 is a 1-deoxy-D-xylulose 5-phosphate binding site. E123 provides a ligand contact to NADPH. D147 serves as a coordination point for Mn(2+). 1-deoxy-D-xylulose 5-phosphate is bound by residues S148, E149, S173, and H196. Position 149 (E149) interacts with Mn(2+). G202 is a binding site for NADPH. Positions 209, 214, 215, and 218 each coordinate 1-deoxy-D-xylulose 5-phosphate. E218 is a Mn(2+) binding site.

Belongs to the DXR family. Mg(2+) is required as a cofactor. Requires Mn(2+) as cofactor.

It carries out the reaction 2-C-methyl-D-erythritol 4-phosphate + NADP(+) = 1-deoxy-D-xylulose 5-phosphate + NADPH + H(+). The protein operates within isoprenoid biosynthesis; isopentenyl diphosphate biosynthesis via DXP pathway; isopentenyl diphosphate from 1-deoxy-D-xylulose 5-phosphate: step 1/6. Catalyzes the NADPH-dependent rearrangement and reduction of 1-deoxy-D-xylulose-5-phosphate (DXP) to 2-C-methyl-D-erythritol 4-phosphate (MEP). This chain is 1-deoxy-D-xylulose 5-phosphate reductoisomerase, found in Chlamydia trachomatis serovar L2 (strain ATCC VR-902B / DSM 19102 / 434/Bu).